Consider the following 115-residue polypeptide: Hydrogenase maturation factor HypA (115 aa).

His2 is a binding site for Ni(2+). Zn(2+) is bound by residues Cys73, Cys76, Cys89, and Cys92.

The protein belongs to the HypA/HybF family.

Functionally, involved in the maturation of [NiFe] hydrogenases. Required for nickel insertion into the metal center of the hydrogenase. This chain is Hydrogenase maturation factor HypA, found in Nitrosospira multiformis (strain ATCC 25196 / NCIMB 11849 / C 71).